We begin with the raw amino-acid sequence, 309 residues long: ATP-dependent Clp protease proteolytic subunit 3, chloroplastic (309 aa).

The transit peptide at 1-70 (MEMSLRLASS…WDVSSFSIDS (70 aa)) directs the protein to the chloroplast. Residue Val-71 is modified to N-acetylvaline. Ser-164 acts as the Nucleophile in catalysis. Residue His-189 is part of the active site. Thr-194 bears the Phosphothreonine mark. The disordered stretch occupies residues 290 to 309 (DNTNLPSERSMTQNGYAAIE). Over residues 292 to 309 (TNLPSERSMTQNGYAAIE) the composition is skewed to polar residues.

This sequence belongs to the peptidase S14 family. As to quaternary structure, component of the chloroplastic Clp protease core complex which consist of at least 16 proteins: CLPP4 (3 copies), CLPP5 (3 copies), CLPR4 (2 copies), ClpP1 (1 copy), CLPP6 (1 copy), CLPR2 (1 copy), CLPT1 (1 copy), CLPT2 (1 copy) and 3 copies of CLPP3 and/or CLPR1 and/or CLPR3. The core complex is organized in two heptameric rings, one containing CLPP3,4,5,6 in a 1:2:3:1 ratio and the other CLPP1 and CLPR1,2,3,4 in a 3:1:1:1:1 ratio. Interacts with CHIP. In terms of processing, ubiquitinated in vitro by CHIP. Mostly expressed in leaves. Also detected in stems, and to a lower extent, in roots (at protein level).

Its subcellular location is the plastid. The protein resides in the chloroplast stroma. The catalysed reaction is Hydrolysis of proteins to small peptides in the presence of ATP and magnesium. alpha-casein is the usual test substrate. In the absence of ATP, only oligopeptides shorter than five residues are hydrolyzed (such as succinyl-Leu-Tyr-|-NHMec, and Leu-Tyr-Leu-|-Tyr-Trp, in which cleavage of the -Tyr-|-Leu- and -Tyr-|-Trp bonds also occurs).. Cleaves peptides in various proteins in a process that requires ATP hydrolysis. Has a chymotrypsin-like activity. Plays a major role in the degradation of misfolded proteins. In the absence of CLPP3, modified ClpPR core(s) could be formed, albeit at strongly reduced levels. This is ATP-dependent Clp protease proteolytic subunit 3, chloroplastic from Arabidopsis thaliana (Mouse-ear cress).